The sequence spans 249 residues: 1-(5-phosphoribosyl)-5-[(5-phosphoribosylamino)methylideneamino] imidazole-4-carboxamide isomerase (249 aa).

The active-site Proton acceptor is the aspartate 11. Residue aspartate 133 is the Proton donor of the active site.

The protein belongs to the HisA/HisF family.

It localises to the cytoplasm. It carries out the reaction 1-(5-phospho-beta-D-ribosyl)-5-[(5-phospho-beta-D-ribosylamino)methylideneamino]imidazole-4-carboxamide = 5-[(5-phospho-1-deoxy-D-ribulos-1-ylimino)methylamino]-1-(5-phospho-beta-D-ribosyl)imidazole-4-carboxamide. Its pathway is amino-acid biosynthesis; L-histidine biosynthesis; L-histidine from 5-phospho-alpha-D-ribose 1-diphosphate: step 4/9. The sequence is that of 1-(5-phosphoribosyl)-5-[(5-phosphoribosylamino)methylideneamino] imidazole-4-carboxamide isomerase from Mannheimia succiniciproducens (strain KCTC 0769BP / MBEL55E).